We begin with the raw amino-acid sequence, 309 residues long: MGVAAAAGRLLAAVDWEREAYPAYRDFFALPLFAVFFLVVRYLLDCFVFEWIGRKLIFGKEKVDYEKEETRKKIRKFKESAWKCVYFLSGEILSLSVTYNEPWFTNTKYFWVGPGDQVWPDQKIKWKLKAVYMYAAGFYTYSIFALMFWETRRSDFGVSMSHHVATVALIVLSYVFRFARVGSVVLAIHDASDVFLEVGKMAKYSHCDLLANVAFLLFVVSWVLLRLTYFPFWILRSTSYEVLLTLDKKKHNFDGPIYYYVFNSLLFSLLVLHIYWWVLIYRMLVRQIKTRNVGDDVRSDSEGEDEHED.

The next 6 helical transmembrane spans lie at 27–47 (FFALPLFAVFFLVVRYLLDCF), 84–104 (CVYFLSGEILSLSVTYNEPWF), 130–150 (AVYMYAAGFYTYSIFALMFWE), 156–176 (FGVSMSHHVATVALIVLSYVF), 215–235 (FLLFVVSWVLLRLTYFPFWIL), and 260–280 (YVFNSLLFSLLVLHIYWWVLI). In terms of domain architecture, TLC spans 75-289 (RKFKESAWKC…IYRMLVRQIK (215 aa)).

The protein localises to the endoplasmic reticulum membrane. Its function is as follows. Mediates resistance to sphinganine-analog mycotoxins (SAMs) by restoring the sphingolipid biosynthesis. Could salvage the transport of GPI-anchored proteins from the endoplasmic reticulum to the Golgi apparatus in ceramides-depleted cells after SAM exposure. This chain is ASC1-like protein 1, found in Oryza sativa subsp. japonica (Rice).